The following is an 85-amino-acid chain: Protein RnfH (85 aa).

This sequence belongs to the UPF0125 (RnfH) family.

This Cereibacter sphaeroides (strain ATCC 17029 / ATH 2.4.9) (Rhodobacter sphaeroides) protein is Protein RnfH.